Consider the following 566-residue polypeptide: Osteoclast stimulatory transmembrane protein (566 aa).

At 1–51 (MPGHPGAAEQLVKTGWRSWHLGFWKALAPLQAAWDAFSQPVPASCGQLLTQ) the chain is on the cytoplasmic side. The chain crosses the membrane as a helical span at residues 52 to 72 (LLLCASLAAAAAGLVYHWLAS). Over 73-81 (LLLYPPGPS) the chain is Extracellular. The helical transmembrane segment at 82–102 (AMVATVCGLLVFLSLGLVPPV) threads the bilayer. The Cytoplasmic segment spans residues 103–128 (RCLFALSVPTLGMEQGRRLLLSYSTA). A helical membrane pass occupies residues 129–149 (TLAIAVVPNVLANVGAAGQVL). Topologically, residues 150 to 227 (RCVTEGSLES…ARAAALGTQR (78 aa)) are extracellular. The helical transmembrane segment at 228–248 (VVTGLFMLGLLVESAWYLHCY) threads the bilayer. Residues 249 to 304 (LTDLRFDNIYATQQLTQRLAQAQATHLLAPPPTWLLQAAQLRLSQEELLSCLLRLG) are Cytoplasmic-facing. A helical transmembrane segment spans residues 305–325 (LLALLLVATAVAVATDHVAFL). Over 326–398 (LAQATVDWAQ…CPLLPARRPR (73 aa)) the chain is Extracellular. The helical transmembrane segment at 399-419 (AAAPLAAGALQLLAGSTVLLE) threads the bilayer. Topologically, residues 420 to 566 (AYARRLRHAI…EGNTGHDRPG (147 aa)) are cytoplasmic.

The protein localises to the membrane. Functionally, probable cell surface receptor that plays a role in cellular fusion and cell differentiation. Cooperates with DCSTAMP in modulating cell-cell fusion in both osteoclasts and foreign body giant cells (FBGCs). Involved in osteoclast bone resorption. Promotes osteoclast differentiation and may play a role in the multinucleated osteoclast maturation. In Homo sapiens (Human), this protein is Osteoclast stimulatory transmembrane protein (OCSTAMP).